The sequence spans 485 residues: Glycogen synthase (485 aa).

Lys15 provides a ligand contact to ADP-alpha-D-glucose.

The protein belongs to the glycosyltransferase 1 family. Bacterial/plant glycogen synthase subfamily.

It catalyses the reaction [(1-&gt;4)-alpha-D-glucosyl](n) + ADP-alpha-D-glucose = [(1-&gt;4)-alpha-D-glucosyl](n+1) + ADP + H(+). It participates in glycan biosynthesis; glycogen biosynthesis. Its function is as follows. Synthesizes alpha-1,4-glucan chains using ADP-glucose. The polypeptide is Glycogen synthase (Francisella philomiragia subsp. philomiragia (strain ATCC 25017 / CCUG 19701 / FSC 153 / O#319-036)).